The following is a 494-amino-acid chain: MNDDARPAPEPQDIPPHSGAADEVNRQDPSRRSVLWTTAGVAGAGLGLGALGAGTASAAGRSAPDAVAAAEAVAAAPPRQGRTMAGVPFERRSTVRVGIIGLGNRGDSMIDLFLALPGVQVKAVCDTVRDKAEKAAKKVTAAGQPAPAIYAKDEHDYENLCKRGDIDFVYVVTPWELHFPMAKTAMLNGKHVGVECPIAMRLEELWQLVDLSERTRRHCMQLENCCYGKNEMRVLRMAHAGLFGELQHGAGAYNHDLRELMFDPDYYEGPWRRLWHTRLRGDLYPNHGFGPVANYMDVNRGDRVVSISSVGTTPLGLAAYREEHMPAGDPSWKESYIGADRTISLVQTAKGRVIRLEHDVSSPHPYSRINSLGGTKGVFEDYPERIYLEPTNTNHQWDDFKKYAEWDHWLWKEHANPPGGHGGMDYIMVFRLMQCMRLGLVPDFDVYDAAVWTAPVPLSHLSIKAKGVPLPIPDFTRGEWKKTRSGMDSEKPAE.

The interval 1 to 32 (MNDDARPAPEPQDIPPHSGAADEVNRQDPSRR) is disordered. The segment at residues 1 to 58 (MNDDARPAPEPQDIPPHSGAADEVNRQDPSRRSVLWTTAGVAGAGLGLGALGAGTASA) is a signal peptide (tat-type signal). NAD(+)-binding positions include 104–105 (NR), aspartate 126, 175–178 (WELH), 195–196 (EC), and asparagine 224. Substrate-binding positions include tyrosine 253, arginine 272, 284–287 (YPNH), and tyrosine 366. Position 284 (tyrosine 284) interacts with NAD(+).

The protein belongs to the Gfo/Idh/MocA family. Glycosyl hydrolase 109 subfamily. It depends on NAD(+) as a cofactor. Post-translationally, predicted to be exported by the Tat system. The position of the signal peptide cleavage has not been experimentally proven.

Its function is as follows. Glycosidase. The protein is Glycosyl hydrolase family 109 protein of Streptomyces filamentosus (Streptomyces roseosporus).